A 447-amino-acid chain; its full sequence is N-succinylarginine dihydrolase (447 aa).

Substrate contacts are provided by residues 19 to 28 (AGLSFGNEAS), Asn110, and 137 to 138 (HR). The active site involves Glu174. Arg212 contributes to the substrate binding site. Residue His248 is part of the active site. Substrate-binding residues include Asp250 and Asn359. The active-site Nucleophile is the Cys365.

The protein belongs to the succinylarginine dihydrolase family. Homodimer.

It catalyses the reaction N(2)-succinyl-L-arginine + 2 H2O + 2 H(+) = N(2)-succinyl-L-ornithine + 2 NH4(+) + CO2. The protein operates within amino-acid degradation; L-arginine degradation via AST pathway; L-glutamate and succinate from L-arginine: step 2/5. Catalyzes the hydrolysis of N(2)-succinylarginine into N(2)-succinylornithine, ammonia and CO(2). The protein is N-succinylarginine dihydrolase of Salmonella heidelberg (strain SL476).